The chain runs to 80 residues: MKKDIHPEYRPVVFMDTTTGYQFLSGSTKRSNETVEFEGETYPLIRVEISSDSHPFYTGRQKFTQADGRVDRFNKKYGLK.

The protein belongs to the bacterial ribosomal protein bL31 family. Type B subfamily. As to quaternary structure, part of the 50S ribosomal subunit.

The chain is Large ribosomal subunit protein bL31B from Streptococcus pneumoniae serotype 2 (strain D39 / NCTC 7466).